The chain runs to 184 residues: Photosystem I assembly protein Ycf4 (184 aa).

The next 2 membrane-spanning stretches (helical) occupy residues 19–39 (ISNF…LLVG) and 57–77 (IVFF…LFIS).

The protein belongs to the Ycf4 family.

It is found in the plastid. The protein localises to the chloroplast thylakoid membrane. In terms of biological role, seems to be required for the assembly of the photosystem I complex. This is Photosystem I assembly protein Ycf4 from Nymphaea alba (White water-lily).